The primary structure comprises 127 residues: Holo-[acyl-carrier-protein] synthase (127 aa).

Aspartate 9 and glutamate 58 together coordinate Mg(2+).

The protein belongs to the P-Pant transferase superfamily. AcpS family. It depends on Mg(2+) as a cofactor.

The protein resides in the cytoplasm. The enzyme catalyses apo-[ACP] + CoA = holo-[ACP] + adenosine 3',5'-bisphosphate + H(+). Its function is as follows. Transfers the 4'-phosphopantetheine moiety from coenzyme A to a Ser of acyl-carrier-protein. In Shewanella sp. (strain ANA-3), this protein is Holo-[acyl-carrier-protein] synthase.